The following is a 199-amino-acid chain: NAD(P)H dehydrogenase (quinone) (199 aa).

One can recognise a Flavodoxin-like domain in the interval 4–190 (MLVLYYSAYG…DGARFQGRRV (187 aa)). FMN-binding positions include 10–15 (SAYGYM) and 78–80 (TRY). Y12 is a binding site for NAD(+). W98 contacts substrate. FMN is bound by residues 113 to 119 (STATQHG) and H134. The interval 157-181 (GGAPYGMTTTADGDGSRQPSAQELD) is disordered. Residues 163 to 177 (MTTTADGDGSRQPSA) show a composition bias toward polar residues.

Belongs to the WrbA family. It depends on FMN as a cofactor.

The enzyme catalyses a quinone + NADH + H(+) = a quinol + NAD(+). It carries out the reaction a quinone + NADPH + H(+) = a quinol + NADP(+). The polypeptide is NAD(P)H dehydrogenase (quinone) (Brucella melitensis biotype 2 (strain ATCC 23457)).